The chain runs to 286 residues: Polyamine aminopropyltransferase (286 aa).

In terms of domain architecture, PABS spans 5 to 238 (TMWHETLHDQ…GIMTFAWATD (234 aa)). Residue Gln33 participates in S-methyl-5'-thioadenosine binding. Residues His64 and Asp88 each coordinate spermidine. S-methyl-5'-thioadenosine is bound by residues Glu108 and 140-141 (DG). The active-site Proton acceptor is the Asp158. 158 to 161 (DCTD) serves as a coordination point for spermidine. Pro165 serves as a coordination point for S-methyl-5'-thioadenosine.

This sequence belongs to the spermidine/spermine synthase family. As to quaternary structure, homodimer or homotetramer.

The protein resides in the cytoplasm. It catalyses the reaction S-adenosyl 3-(methylsulfanyl)propylamine + putrescine = S-methyl-5'-thioadenosine + spermidine + H(+). Its pathway is amine and polyamine biosynthesis; spermidine biosynthesis; spermidine from putrescine: step 1/1. Catalyzes the irreversible transfer of a propylamine group from the amino donor S-adenosylmethioninamine (decarboxy-AdoMet) to putrescine (1,4-diaminobutane) to yield spermidine. In Salmonella enteritidis PT4 (strain P125109), this protein is Polyamine aminopropyltransferase.